We begin with the raw amino-acid sequence, 377 residues long: Actin-related protein T2 (377 aa).

This sequence belongs to the actin family.

It is found in the cytoplasm. It localises to the cytoskeleton. The protein is Actin-related protein T2 (ACTRT2) of Bos taurus (Bovine).